The chain runs to 106 residues: UPF0145 protein CTC_01500 (106 aa).

Belongs to the UPF0145 family.

The chain is UPF0145 protein CTC_01500 from Clostridium tetani (strain Massachusetts / E88).